Consider the following 475-residue polypeptide: Ribulose bisphosphate carboxylase large chain (475 aa).

The propeptide occupies 1–2 (MS). Proline 3 bears the N-acetylproline mark. Lysine 14 carries the post-translational modification N6,N6,N6-trimethyllysine. Residues asparagine 123 and threonine 173 each contribute to the substrate site. The active-site Proton acceptor is lysine 175. Lysine 177 is a binding site for substrate. Lysine 201, aspartate 203, and glutamate 204 together coordinate Mg(2+). Lysine 201 carries the post-translational modification N6-carboxylysine. Catalysis depends on histidine 294, which acts as the Proton acceptor. The substrate site is built by arginine 295, histidine 327, and serine 379.

This sequence belongs to the RuBisCO large chain family. Type I subfamily. Heterohexadecamer of 8 large chains and 8 small chains; disulfide-linked. The disulfide link is formed within the large subunit homodimers. The cofactor is Mg(2+). In terms of processing, the disulfide bond which can form in the large chain dimeric partners within the hexadecamer appears to be associated with oxidative stress and protein turnover.

The protein localises to the plastid. Its subcellular location is the chloroplast. The catalysed reaction is 2 (2R)-3-phosphoglycerate + 2 H(+) = D-ribulose 1,5-bisphosphate + CO2 + H2O. It catalyses the reaction D-ribulose 1,5-bisphosphate + O2 = 2-phosphoglycolate + (2R)-3-phosphoglycerate + 2 H(+). Its function is as follows. RuBisCO catalyzes two reactions: the carboxylation of D-ribulose 1,5-bisphosphate, the primary event in carbon dioxide fixation, as well as the oxidative fragmentation of the pentose substrate in the photorespiration process. Both reactions occur simultaneously and in competition at the same active site. The sequence is that of Ribulose bisphosphate carboxylase large chain from Pinus thunbergii (Japanese black pine).